The following is a 707-amino-acid chain: NAD(P)H-quinone oxidoreductase subunit 5, chloroplastic (707 aa).

Helical transmembrane passes span 9-29 (WIIP…LLLF), 40-60 (WAFP…DLSI), 89-109 (IDSL…FVLI), 125-145 (FAYM…SNLI), 147-167 (IYIF…FWFT), 184-204 (IGDF…GSFE), 219-239 (NEVH…GAVA), 258-278 (TPIS…FLVA), 280-300 (LLPL…IGII), 327-347 (LGYM…FHLI), 354-374 (ALLF…VGYS), 396-416 (IAFL…CFWS), 425-445 (WLYS…TAFY), 538-558 (LFPM…AIPL), and 592-612 (FLTN…TAFL).

This sequence belongs to the complex I subunit 5 family. As to quaternary structure, NDH is composed of at least 16 different subunits, 5 of which are encoded in the nucleus.

It localises to the plastid. The protein resides in the chloroplast thylakoid membrane. The catalysed reaction is a plastoquinone + NADH + (n+1) H(+)(in) = a plastoquinol + NAD(+) + n H(+)(out). It carries out the reaction a plastoquinone + NADPH + (n+1) H(+)(in) = a plastoquinol + NADP(+) + n H(+)(out). In terms of biological role, NDH shuttles electrons from NAD(P)H:plastoquinone, via FMN and iron-sulfur (Fe-S) centers, to quinones in the photosynthetic chain and possibly in a chloroplast respiratory chain. The immediate electron acceptor for the enzyme in this species is believed to be plastoquinone. Couples the redox reaction to proton translocation, and thus conserves the redox energy in a proton gradient. The chain is NAD(P)H-quinone oxidoreductase subunit 5, chloroplastic (ndhF) from Malvaviscus arboreus (Turk's cap).